A 155-amino-acid polypeptide reads, in one-letter code: MNPLRKKRLLIIAALLAGVGLAMTLALGALKENINLFYTPSQIANGEAPLDTRIRAGGMVEKGSLQRSADSLDVRFVVTDFNKSVTITYRGILPDLFREGQGIVALGKLNAQGVVVADEVLAKHDEKYMPPEVTKALRDSGQAAPGGSSTPAKQG.

The Cytoplasmic portion of the chain corresponds to 1–8 (MNPLRKKR). A helical; Signal-anchor for type II membrane protein membrane pass occupies residues 9–29 (LLIIAALLAGVGLAMTLALGA). Residues 30 to 155 (LKENINLFYT…GGSSTPAKQG (126 aa)) are Periplasmic-facing. Residues His124 and Tyr128 each contribute to the heme site. Positions 134-155 (TKALRDSGQAAPGGSSTPAKQG) are disordered.

The protein belongs to the CcmE/CycJ family.

It localises to the cell inner membrane. In terms of biological role, heme chaperone required for the biogenesis of c-type cytochromes. Transiently binds heme delivered by CcmC and transfers the heme to apo-cytochromes in a process facilitated by CcmF and CcmH. The chain is Cytochrome c-type biogenesis protein CcmE from Pseudomonas savastanoi pv. phaseolicola (strain 1448A / Race 6) (Pseudomonas syringae pv. phaseolicola (strain 1448A / Race 6)).